The chain runs to 130 residues: MAPRLGIFLLWAGVSVFLPLDPVNGDQHLPGRFLTPAITSDDKCVFPFIYKGNLYFDCTLHDSTYYWCSVTTYYMKRWRYCRSTDYARCALPFIFRGKEYDSCIKEGSVFSKYWCPVTPNYDQDRAWRYC.

The first 25 residues, 1–25 (MAPRLGIFLLWAGVSVFLPLDPVNG), serve as a signal peptide directing secretion. Fibronectin type-II domains are found at residues 39–83 (TSDD…YCRS) and 84–130 (TDYA…WRYC). Disulfide bonds link Cys44–Cys68, Cys58–Cys81, Cys89–Cys115, and Cys103–Cys130.

The protein belongs to the seminal plasma protein family. In terms of tissue distribution, component of seminal plasma.

The protein localises to the secreted. In terms of biological role, may form a complex with spermadhesin AQN-1 which possesses phosphorylcholine-binding activity. The chain is Seminal plasma protein pB1 from Sus scrofa (Pig).